The chain runs to 1500 residues: Synaptonemal complex protein 2 (1500 aa).

A phosphoserine mark is found at S457 and S458. T464 carries the post-translational modification Phosphothreonine. At S487 the chain carries Phosphoserine. Residue T496 is modified to Phosphothreonine. Phosphoserine is present on residues S500, S509, S518, and S527. The segment at 512-548 (KAVSKTSESGMDYAASPKSRQSDGRKRWNNRANHNKT) is disordered. T608 and T633 each carry phosphothreonine. 3 positions are modified to phosphoserine: S646, S650, and S741. The disordered stretch occupies residues 796–820 (NPSDSMMSTRKLKEPQDGSGFSKKP). S914 is modified (phosphoserine). At T916 the chain carries Phosphothreonine. Disordered regions lie at residues 940 to 1010 (LMDY…TSES) and 1029 to 1084 (KEET…SASV). Over residues 948–958 (NTTKYKSRKSR) the composition is skewed to basic residues. Positions 977–989 (MKNDYEVVVDGRT) are enriched in basic and acidic residues. Residues 990–1000 (RLPRRATKTKK) show a composition bias toward basic residues. A compositionally biased stretch (basic and acidic residues) spans 1059 to 1076 (PSEEQKNSSRLREGREDS). A phosphoserine mark is found at S1115, S1117, S1124, S1133, S1140, S1144, S1156, S1159, and S1164. A Phosphothreonine modification is found at T1168. Residues S1183, S1213, and S1216 each carry the phosphoserine modification. A disordered region spans residues 1208-1234 (YMEPESPESCDNHMQNKREGNHAASPL). Basic and acidic residues predominate over residues 1217-1228 (CDNHMQNKREGN). Residues S1232, S1275, and S1277 each carry the phosphoserine modification. T1313 carries the post-translational modification Phosphothreonine. A coiled-coil region spans residues 1388-1429 (LLDELEKVEKDSQTLRDLEKELVDIEEKLVQKMRAYHRCERE).

This sequence belongs to the SYCP2 family. In terms of assembly, component of the lateral elements of synaptonemal complexes. Heterodimer with SYCP3. Interacts with SMC1A and SMC3. Interacts with TEX11. Phosphorylated. In terms of tissue distribution, detected in testis and spermatocytes (at protein level).

The protein resides in the nucleus. Its subcellular location is the chromosome. Major component of the axial/lateral elements of synaptonemal complexes (SCS) during meiotic prophase. Plays a role in the assembly of synaptonemal complexes. Required for normal meiotic chromosome synapsis during oocyte and spermatocyte development and for normal male and female fertility. Required for insertion of SYCP3 into synaptonemal complexes. May be involved in the organization of chromatin by temporarily binding to DNA scaffold attachment regions. Requires SYCP3, but not SYCP1, in order to be incorporated into the axial/lateral elements. The chain is Synaptonemal complex protein 2 (Sycp2) from Mus musculus (Mouse).